Reading from the N-terminus, the 82-residue chain is Small ribosomal subunit protein bS16 (82 aa).

The protein belongs to the bacterial ribosomal protein bS16 family.

The protein is Small ribosomal subunit protein bS16 of Pasteurella multocida (strain Pm70).